A 396-amino-acid polypeptide reads, in one-letter code: uncharacterized protein (396 aa).

[4Fe-4S] cluster contacts are provided by C8, C14, C17, and C95. The S-adenosyl-L-methionine site is built by Q229, Y258, E279, and D325. The active-site Nucleophile is C352.

This sequence belongs to the class I-like SAM-binding methyltransferase superfamily. RNA M5U methyltransferase family.

This is an uncharacterized protein from Chlamydia trachomatis serovar D (strain ATCC VR-885 / DSM 19411 / UW-3/Cx).